A 78-amino-acid polypeptide reads, in one-letter code: Omega-conotoxin-like SO-4 (78 aa).

The first 22 residues, 1-22, serve as a signal peptide directing secretion; it reads MKLTCMVIVAVLLLTACQLITA. Residues 23–42 constitute a propeptide that is removed on maturation; sequence DDSRGTQKHRSLRSTTKVSK. Intrachain disulfides connect C46/C62, C53/C65, and C61/C72.

Belongs to the conotoxin O1 superfamily. In terms of tissue distribution, expressed by the venom duct.

The protein resides in the secreted. Its function is as follows. Omega-conotoxins act at presynaptic membranes, they bind and block voltage-gated calcium channels (Cav). This is Omega-conotoxin-like SO-4 (SO4) from Conus striatus (Striated cone).